A 105-amino-acid chain; its full sequence is UPF0235 protein RrIowa_1526 (105 aa).

Belongs to the UPF0235 family.

The protein is UPF0235 protein RrIowa_1526 of Rickettsia rickettsii (strain Iowa).